The primary structure comprises 606 residues: Ubiquitin carboxyl-terminal hydrolase 2 (606 aa).

Residues 1-201 (MSQLSSTLKR…RSEYLADYLE (201 aa)) form a necessary for interaction with MDM4 region. Disordered stretches follow at residues 53–112 (PSPP…GGSG) and 207–228 (ASAP…LSPT). A compositionally biased stretch (basic and acidic residues) spans 90–100 (KRAESQTRGTE). Residues 268-600 (AGLRNLGNTC…DAYLLFYELA (333 aa)) form the USP domain. Catalysis depends on Cys-277, which acts as the Nucleophile. A necessary for interaction with MDM4 region spans residues 404 to 504 (YLEREDSRIG…FPKILVLHLK (101 aa)). Zn(2+)-binding residues include Cys-426, Cys-429, Cys-477, and Cys-480. The active-site Proton acceptor is the His-558.

This sequence belongs to the peptidase C19 family. USP2 subfamily. As to quaternary structure, homooligomer. Found in trimeric complex with MDM2 and MDM4 and USP2. Interacts with CCND1; the interaction is direct and promotes its stabilization by antagonizing ubiquitin-dependent degradation. Interacts (via N-terminus and C-terminus) with MDM2. Interacts with MDM4 and PER1. Interacts with KCNQ1; counteracts the NEDD4L-specific down-regulation of I(Ks) and restores plasma membrane localization of KCNQ1.

The protein resides in the cytoplasm. It localises to the perinuclear region. It carries out the reaction Thiol-dependent hydrolysis of ester, thioester, amide, peptide and isopeptide bonds formed by the C-terminal Gly of ubiquitin (a 76-residue protein attached to proteins as an intracellular targeting signal).. Cleavage is inhibited by ubiquitin in a dosage-dependent manner. Cleavage is blocked by ubiquitin aldehyde. In terms of biological role, hydrolase that deubiquitinates polyubiquitinated target proteins such as MDM2, MDM4 and CCND1. Possesses both ubiquitin-specific peptidase and isopeptidase activities. Deubiquitinates MDM2 without reversing MDM2-mediated p53/TP53 ubiquitination and thus indirectly promotes p53/TP53 degradation and limits p53 activity. Has no deubiquitinase activity against p53/TP53. Prevents MDM2-mediated degradation of MDM4. Plays a role in the G1/S cell-cycle progression in normal and cancer cells. Plays a role in the regulation of myogenic differentiation of embryonic muscle cells. Regulates the circadian clock by modulating its intrinsic circadian rhythm and its capacity to respond to external cues. Associates with clock proteins and deubiquitinates core clock component PER1 but does not affect its overall stability. Regulates the nucleocytoplasmic shuttling and nuclear retention of PER1 and its repressive role on the clock transcription factors CLOCK and BMAL1. This chain is Ubiquitin carboxyl-terminal hydrolase 2 (USP2), found in Bos taurus (Bovine).